A 296-amino-acid polypeptide reads, in one-letter code: Diheme cytochrome c-type (296 aa).

Residues cysteine 52, cysteine 55, histidine 56, cysteine 202, cysteine 205, and histidine 206 each coordinate heme c.

Post-translationally, binds 2 heme c groups covalently per subunit.

It is found in the cell membrane. In terms of biological role, particularly expressed when cells generate energy via aerobic respiration. The polypeptide is Diheme cytochrome c-type (cycG) (Cereibacter sphaeroides (strain ATCC 17023 / DSM 158 / JCM 6121 / CCUG 31486 / LMG 2827 / NBRC 12203 / NCIMB 8253 / ATH 2.4.1.) (Rhodobacter sphaeroides)).